The primary structure comprises 248 residues: Small ribosomal subunit protein uS2 (248 aa).

Belongs to the universal ribosomal protein uS2 family.

This chain is Small ribosomal subunit protein uS2, found in Thiobacillus denitrificans (strain ATCC 25259 / T1).